A 209-amino-acid polypeptide reads, in one-letter code: Peroxynitrite isomerase 2 (209 aa).

Positions 56–62 match the GXWXGXG motif; it reads GVWRGEG. Heme b is bound by residues K172 and H199.

It belongs to the nitrobindin family. As to quaternary structure, homodimer. Requires heme b as cofactor.

The catalysed reaction is peroxynitrite = nitrate. It participates in nitrogen metabolism. Functionally, heme-binding protein able to scavenge peroxynitrite and to protect free L-tyrosine against peroxynitrite-mediated nitration, by acting as a peroxynitrite isomerase that converts peroxynitrite to nitrate. Therefore, this protein likely plays a role in peroxynitrite sensing and in the detoxification of reactive nitrogen and oxygen species (RNS and ROS, respectively). Is able to bind nitric oxide (NO) in vitro, but may act as a sensor of peroxynitrite levels in vivo. In Mycolicibacterium vanbaalenii (strain DSM 7251 / JCM 13017 / BCRC 16820 / KCTC 9966 / NRRL B-24157 / PYR-1) (Mycobacterium vanbaalenii), this protein is Peroxynitrite isomerase 2.